We begin with the raw amino-acid sequence, 464 residues long: Arginine biosynthesis bifunctional protein ArgJ, chloroplastic (464 aa).

Residues Thr-208, Lys-234, Thr-245, Glu-332, Asn-459, and Thr-464 each contribute to the substrate site. Thr-245 serves as the catalytic Nucleophile.

It belongs to the ArgJ family. In terms of assembly, heterodimer of an alpha and a beta chain.

Its subcellular location is the plastid. It is found in the chloroplast. It carries out the reaction N(2)-acetyl-L-ornithine + L-glutamate = N-acetyl-L-glutamate + L-ornithine. The enzyme catalyses L-glutamate + acetyl-CoA = N-acetyl-L-glutamate + CoA + H(+). It participates in amino-acid biosynthesis; L-arginine biosynthesis; L-ornithine and N-acetyl-L-glutamate from L-glutamate and N(2)-acetyl-L-ornithine (cyclic): step 1/1. It functions in the pathway amino-acid biosynthesis; L-arginine biosynthesis; N(2)-acetyl-L-ornithine from L-glutamate: step 1/4. Catalyzes two activities which are involved in the cyclic version of arginine biosynthesis: the synthesis of acetylglutamate from glutamate and acetyl-CoA, and of ornithine by transacetylation between acetylornithine and glutamate. This chain is Arginine biosynthesis bifunctional protein ArgJ, chloroplastic, found in Zea mays (Maize).